We begin with the raw amino-acid sequence, 337 residues long: Peroxisome biogenesis factor 10 (337 aa).

The Peroxisomal matrix portion of the chain corresponds to 1-24; it reads MKNDNKLQKEALMRLSQLRFPFAD. The helical transmembrane segment at 25 to 54 threads the bilayer; that stretch reads APSIVQAHQKDEQIQGLLIMKVTELCKLIK. A topological domain (cytoplasmic) is located at residue serine 55. The helical transmembrane segment at 56–77 threads the bilayer; it reads QLFVNSYPKELSIFAKLLYLLF. The Peroxisomal matrix segment spans residues 78-105; it reads TTGRRGRTLGEEYVDLTYTNRKGTRLAG. The helical transmembrane segment at 106–138 threads the bilayer; that stretch reads RLKMIVFAFAYPLCPYFITKLYKKIMKNNKESK. At 139–145 the chain is on the cytoplasmic side; it reads IEDTESV. The helical transmembrane segment at 146–166 threads the bilayer; that stretch reads AAFCKGLLDFILDVHMTLFYF. At 167 to 202 the chain is on the peroxisomal matrix side; sequence KGAFYSISKRIFGMRYVFKHILSKNEANFREEGSQK. Residues 203 to 222 traverse the membrane as a helical segment; the sequence is YKVLGYILLAQNVMKWYPVL. The Cytoplasmic segment spans residues 223-337; it reads TSTLGSWIYG…QPQEILVLRQ (115 aa). 8 residues coordinate Zn(2+): cysteine 286, cysteine 289, cysteine 301, histidine 303, cysteine 306, cysteine 309, cysteine 320, and cysteine 323. The RING-type zinc-finger motif lies at 286 to 327; sequence CILCLMNMSDPSCAPCGHLFCWSCLMSWCKERPECPLCRQHC.

This sequence belongs to the pex2/pex10/pex12 family. As to quaternary structure, component of the PEX2-PEX10-PEX12 retrotranslocation channel, composed of PEX2, PEX10 and PEX12.

It is found in the peroxisome membrane. The enzyme catalyses S-ubiquitinyl-[E2 ubiquitin-conjugating enzyme]-L-cysteine + [acceptor protein]-L-lysine = [E2 ubiquitin-conjugating enzyme]-L-cysteine + N(6)-ubiquitinyl-[acceptor protein]-L-lysine.. It functions in the pathway protein modification; protein ubiquitination. The E3 ubiquitin-protein ligase activity is stimulated by PEX12. Its function is as follows. E3 ubiquitin-protein ligase component of a retrotranslocation channel required for peroxisome organization by mediating export of the PEX5 receptor from peroxisomes to the cytosol, thereby promoting PEX5 recycling. The retrotranslocation channel is composed of PEX2, PEX10 and PEX12; each subunit contributing transmembrane segments that coassemble into an open channel that specifically allows the passage of PEX5 through the peroxisomal membrane. PEX10 also regulates PEX5 recycling by acting as a E3 ubiquitin-protein ligase. When PEX5 recycling is compromised, PEX10 catalyzes polyubiquitination of PEX5 during its passage through the retrotranslocation channel, leading to its degradation. This Saccharomyces cerevisiae (strain ATCC 204508 / S288c) (Baker's yeast) protein is Peroxisome biogenesis factor 10.